Consider the following 311-residue polypeptide: Methionyl-tRNA formyltransferase (311 aa).

110-113 (SLLP) contributes to the (6S)-5,6,7,8-tetrahydrofolate binding site.

This sequence belongs to the Fmt family.

The enzyme catalyses L-methionyl-tRNA(fMet) + (6R)-10-formyltetrahydrofolate = N-formyl-L-methionyl-tRNA(fMet) + (6S)-5,6,7,8-tetrahydrofolate + H(+). Attaches a formyl group to the free amino group of methionyl-tRNA(fMet). The formyl group appears to play a dual role in the initiator identity of N-formylmethionyl-tRNA by promoting its recognition by IF2 and preventing the misappropriation of this tRNA by the elongation apparatus. The protein is Methionyl-tRNA formyltransferase of Streptococcus mutans serotype c (strain ATCC 700610 / UA159).